The chain runs to 147 residues: Large ribosomal subunit protein bL9 (147 aa).

The protein belongs to the bacterial ribosomal protein bL9 family.

Functionally, binds to the 23S rRNA. The chain is Large ribosomal subunit protein bL9 from Trichlorobacter lovleyi (strain ATCC BAA-1151 / DSM 17278 / SZ) (Geobacter lovleyi).